We begin with the raw amino-acid sequence, 396 residues long: Metallophosphoesterase 1 (396 aa).

The helical transmembrane segment at 27–47 (IAVVFAVLLFCEFLIYYLAIF) threads the bilayer. A divalent metal cation-binding residues include D77, D119, N157, H249, H303, and H305. The chain crosses the membrane as a helical span at residues 356-376 (VVLVIYCGAVGFLVVLTLSHL). The Di-lysine motif signature appears at 392-396 (KRKTR).

Belongs to the metallophosphoesterase superfamily. MPPE1 family. As to quaternary structure, interacts with GPI-anchor proteins (via the GPI portion). Interacts with TMED10. Mn(2+) is required as a cofactor.

Its subcellular location is the endoplasmic reticulum-Golgi intermediate compartment membrane. Functionally, metallophosphoesterase that catalyzes the removal of a side-chain ethanolamine-phosphate (EtNP) from the second mannose of the GPI-anchor protein intermediate. Participates in the glycan remodeling steps of GPI-anchor maturation to allow an efficient transport of GPI-anchor proteins from the endoplasmic reticulum to the Golgi. The sequence is that of Metallophosphoesterase 1 from Macaca fascicularis (Crab-eating macaque).